The primary structure comprises 310 residues: MPQRHSKNNNDLAYFTYDEKKKLGYGTQRERLGRDSIKPFDACSLCLKPFIDPMCCHKGHVFCRECILECFLAQKKDIQRRLAAHSSQKKQDKDEEEERLMLQKARELDEFDQQNHSAMPRNSDKNHNEDKNGFHGANSVKTTSFEEEALRTMKAFWLPSATPAASVRVDAPETHTVCPEGKEKLKLKNLFAIRFTEDNSEEEETKTKSASSSSYDKSYICPSCKVTLTNTMSLVALSSCGHVFCKKCAEKFMPVDKVCLVCDKPCKDRNLVGLKKGGTGFAEHDDHLEAKEYKHLGSGSGLGLVRPVKT.

The RING-type 1; degenerate zinc finger occupies C43–I67. Residues K75–E95 adopt a coiled-coil conformation. The segment at E110–N138 is disordered. Over residues N122–G133 the composition is skewed to basic and acidic residues. Residues C221 to D263 form an RING-type 2 zinc finger.

It belongs to the NOSIP family.

It localises to the nucleus. Its subcellular location is the nucleus speckle. It catalyses the reaction S-ubiquitinyl-[E2 ubiquitin-conjugating enzyme]-L-cysteine + [acceptor protein]-L-lysine = [E2 ubiquitin-conjugating enzyme]-L-cysteine + N(6)-ubiquitinyl-[acceptor protein]-L-lysine.. It participates in protein modification; protein ubiquitination. Functionally, RING-finger E3 ubiquitin-protein ligase that plays an major role in maintaining COP1 homeostasis in darkness. Negatively regulates COP1 protein accumulation by targeting COP1 for ubiquitination and subsequent proteasomal degradation in dark-grown seedlings. Negatively regulates the accumulation of SPA1 protein in the dark. The polypeptide is E3 ubiquitin-protein ligase CSU1 (Arabidopsis thaliana (Mouse-ear cress)).